A 249-amino-acid chain; its full sequence is Metallo-beta-lactamase type 2 (249 aa).

The first 18 residues, 1–18 (MKTVFILISMLFPVAVMA), serve as a signal peptide directing secretion. Residues H99, H101, D103, H162, and C181 each contribute to the Zn(2+) site. 2 residues coordinate substrate: K184 and N193. H223 is a Zn(2+) binding site.

This sequence belongs to the metallo-beta-lactamase superfamily. Class-B beta-lactamase family. In terms of assembly, monomer. It depends on Zn(2+) as a cofactor.

It is found in the periplasm. It catalyses the reaction a beta-lactam + H2O = a substituted beta-amino acid. Competitively inhibited by 4-morpholineethanesulfonic acid (MES), SB236050 and biphenyl tetrazoles (BPTs). Also inhibited by chelating agents such as EDTA and 1,10-phenanthroline. CcrA is not susceptible to inactivation by the beta-lactamase-blocking agents clavulanic acid or tazobactam. Functionally, confers resistance to the different beta-lactams antibiotics (penicillin, cephalosporin and carbapenem) via the hydrolysis of the beta-lactam ring. The chain is Metallo-beta-lactamase type 2 from Bacteroides fragilis.